The chain runs to 89 residues: Small ribosomal subunit protein uS15 (89 aa).

The protein belongs to the universal ribosomal protein uS15 family. In terms of assembly, part of the 30S ribosomal subunit. Forms a bridge to the 50S subunit in the 70S ribosome, contacting the 23S rRNA.

In terms of biological role, one of the primary rRNA binding proteins, it binds directly to 16S rRNA where it helps nucleate assembly of the platform of the 30S subunit by binding and bridging several RNA helices of the 16S rRNA. Functionally, forms an intersubunit bridge (bridge B4) with the 23S rRNA of the 50S subunit in the ribosome. The sequence is that of Small ribosomal subunit protein uS15 from Salinispora arenicola (strain CNS-205).